Consider the following 507-residue polypeptide: Ribonuclease Y (507 aa).

A helical transmembrane segment spans residues 1-21; that stretch reads MLWYIVAGAGGLLIGYLIANY. Residues 197 to 282 form the KH domain; sequence TVSTVSLPSD…EMYEKAKQEV (86 aa). The HD domain maps to 323–416; sequence VLNHSIEVAL…VAAADALSAA (94 aa).

This sequence belongs to the RNase Y family.

The protein resides in the cell membrane. Endoribonuclease that initiates mRNA decay. This Thermotoga sp. (strain RQ2) protein is Ribonuclease Y.